A 462-amino-acid chain; its full sequence is Argininosuccinate lyase (462 aa).

The protein belongs to the lyase 1 family. Argininosuccinate lyase subfamily.

It localises to the cytoplasm. It catalyses the reaction 2-(N(omega)-L-arginino)succinate = fumarate + L-arginine. Its pathway is amino-acid biosynthesis; L-arginine biosynthesis; L-arginine from L-ornithine and carbamoyl phosphate: step 3/3. This Xanthobacter autotrophicus (strain ATCC BAA-1158 / Py2) protein is Argininosuccinate lyase.